The sequence spans 490 residues: B3 domain-containing protein REM14 (490 aa).

3 consecutive DNA-binding regions (TF-B3) follow at residues 3-95 (NQHF…LGPS), 130-226 (CFSA…LPKG), and 236-333 (CFVA…LSNE). The tract at residues 343–367 (NEVESLSTDQESHEESSHNEKISRR) is disordered. The span at 352–364 (QESHEESSHNEKI) shows a compositional bias: basic and acidic residues. The TF-B3 4 DNA-binding region spans 387 to 484 (FVTLNLTPYN…TSCVLKFCSK (98 aa)).

Its subcellular location is the nucleus. The protein is B3 domain-containing protein REM14 (REM14) of Arabidopsis thaliana (Mouse-ear cress).